The primary structure comprises 434 residues: Trigger factor (434 aa).

In terms of domain architecture, PPIase FKBP-type spans 160 to 245 (GDKVKMNFVG…LTEVLAANLP (86 aa)).

This sequence belongs to the FKBP-type PPIase family. Tig subfamily.

It is found in the cytoplasm. The catalysed reaction is [protein]-peptidylproline (omega=180) = [protein]-peptidylproline (omega=0). Functionally, involved in protein export. Acts as a chaperone by maintaining the newly synthesized protein in an open conformation. Functions as a peptidyl-prolyl cis-trans isomerase. This is Trigger factor from Shewanella sp. (strain MR-4).